A 279-amino-acid chain; its full sequence is MPEEISQYLFICFKSFFLGIIQGFTEFLPISSTAHLKVVPYLFGWNDLGVSFSASIQLGSAVAIIYYFRNQISLIINSFFSSFNPSKGFKDENSRLFIYIFVASIPILVFGLLIKLYWPNYSDSNLRGLFSIAITSIVMSLLLALSEIYGKRNKLFVDINLNDVIKLGLAQSLALFPGVSRSGITLTSALFSGIERKTAARLSFLVGIPAVSISGLVELFSLFRVLSVIDIIPIIIGIISSFFSSIFAIDLFLKFLSKNNTLVFVYYRLAFGIFILTTL.

Transmembrane regions (helical) follow at residues 10–30 (FICF…FLPI), 48–68 (LGVS…IYYF), 96–116 (LFIY…LIKL), 128–148 (GLFS…LSEI), 203–223 (SFLV…FSLF), 229–249 (IDII…IFAI), and 259–279 (NNTL…LTTL).

The protein belongs to the UppP family.

It is found in the cell inner membrane. It carries out the reaction di-trans,octa-cis-undecaprenyl diphosphate + H2O = di-trans,octa-cis-undecaprenyl phosphate + phosphate + H(+). Catalyzes the dephosphorylation of undecaprenyl diphosphate (UPP). Confers resistance to bacitracin. This chain is Undecaprenyl-diphosphatase, found in Prochlorococcus marinus (strain NATL1A).